Consider the following 965-residue polypeptide: 26S proteasome regulatory subunit rpn2 (965 aa).

10 PC repeats span residues T385 to S418, G424 to Q457, G459 to S493, A494 to I528, G530 to Y563, A564 to R599, A600 to R632, G634 to Q668, G669 to V699, and G712 to V744. Disordered stretches follow at residues A826 to T883 and N934 to D965. 2 stretches are compositionally biased toward basic and acidic residues: residues K827–T856 and S874–T883. A compositionally biased stretch (acidic residues) spans E945–D965. S952 carries the post-translational modification Phosphoserine.

It belongs to the proteasome subunit S1 family.

Acts as a regulatory subunit of the 26S proteasome which is involved in the ATP-dependent degradation of ubiquitinated proteins. The polypeptide is 26S proteasome regulatory subunit rpn2 (rpn2) (Schizosaccharomyces pombe (strain 972 / ATCC 24843) (Fission yeast)).